The primary structure comprises 352 residues: 3-isopropylmalate dehydrogenase (352 aa).

Substrate contacts are provided by arginine 91, arginine 101, arginine 129, and aspartate 218. Residues aspartate 218, aspartate 242, and aspartate 246 each contribute to the Mg(2+) site. NAD(+) is bound at residue 281 to 293 (GSAPDIAGKGLAN).

The protein belongs to the isocitrate and isopropylmalate dehydrogenases family. LeuB type 1 subfamily. As to quaternary structure, homodimer. It depends on Mg(2+) as a cofactor. Mn(2+) serves as cofactor.

The protein resides in the cytoplasm. It carries out the reaction (2R,3S)-3-isopropylmalate + NAD(+) = 4-methyl-2-oxopentanoate + CO2 + NADH. Its pathway is amino-acid biosynthesis; L-leucine biosynthesis; L-leucine from 3-methyl-2-oxobutanoate: step 3/4. Its function is as follows. Catalyzes the oxidation of 3-carboxy-2-hydroxy-4-methylpentanoate (3-isopropylmalate) to 3-carboxy-4-methyl-2-oxopentanoate. The product decarboxylates to 4-methyl-2 oxopentanoate. The sequence is that of 3-isopropylmalate dehydrogenase from Novosphingobium aromaticivorans (strain ATCC 700278 / DSM 12444 / CCUG 56034 / CIP 105152 / NBRC 16084 / F199).